The following is a 100-amino-acid chain: MAKKSLIYREKKRQKLEEKYHLIRRSSKKEISKIPSLSDKWKIHGKLQSPPRNSAPTRLHRRCFSTGRPRATYRDFGLSGHILREMVHACLLPGATRSSW.

Belongs to the universal ribosomal protein uS14 family. Part of the 30S ribosomal subunit.

Its subcellular location is the plastid. The protein resides in the chloroplast. Binds 16S rRNA, required for the assembly of 30S particles. In Aethionema cordifolium (Lebanon stonecress), this protein is Small ribosomal subunit protein uS14c.